The primary structure comprises 209 residues: Streptogramin A acetyltransferase (209 aa).

Residue His-82 is part of the active site.

Belongs to the transferase hexapeptide repeat family. In terms of assembly, homohexamer.

Its function is as follows. Inactivates the A compounds of streptogramin antibiotics by acetylation, thus providing resistance to these antibiotics. In Enterococcus faecium (Streptococcus faecium), this protein is Streptogramin A acetyltransferase (vatD).